Consider the following 338-residue polypeptide: D-erythrose-4-phosphate dehydrogenase (338 aa).

Residue 11-12 participates in NAD(+) binding; that stretch reads RI. Residues 153–155, arginine 199, 212–213, and arginine 235 contribute to the substrate site; these read SCT and TK. The active-site Nucleophile is cysteine 154. Asparagine 317 provides a ligand contact to NAD(+).

Belongs to the glyceraldehyde-3-phosphate dehydrogenase family. Epd subfamily. Homotetramer.

Its subcellular location is the cytoplasm. It carries out the reaction D-erythrose 4-phosphate + NAD(+) + H2O = 4-phospho-D-erythronate + NADH + 2 H(+). It functions in the pathway cofactor biosynthesis; pyridoxine 5'-phosphate biosynthesis; pyridoxine 5'-phosphate from D-erythrose 4-phosphate: step 1/5. Its function is as follows. Catalyzes the NAD-dependent conversion of D-erythrose 4-phosphate to 4-phosphoerythronate. This is D-erythrose-4-phosphate dehydrogenase from Shewanella baltica (strain OS223).